Here is a 699-residue protein sequence, read N- to C-terminus: SHC SH2 domain-binding protein 1 homolog A (699 aa).

3 PbH1 repeats span residues Ser480–Pro502, Gly503–Asp524, and Ile532–Lys554. A coiled-coil region spans residues Ala603 to Glu627.

It is found in the midbody. The protein resides in the cytoplasm. Its subcellular location is the cytoskeleton. The protein localises to the spindle. Its function is as follows. May play a role in signaling pathways governing cellular proliferation. The sequence is that of SHC SH2 domain-binding protein 1 homolog A (shcbp1-a) from Xenopus laevis (African clawed frog).